The sequence spans 455 residues: Tubulin alpha chain (455 aa).

8 residues coordinate GTP: Gln-11, Glu-77, Ser-145, Gly-149, Thr-150, Ser-184, Asn-211, and Asn-233. Glu-77 serves as a coordination point for Mg(2+). Residue Glu-259 is part of the active site.

This sequence belongs to the tubulin family. As to quaternary structure, dimer of alpha and beta chains. A typical microtubule is a hollow water-filled tube with an outer diameter of 25 nm and an inner diameter of 15 nM. Alpha-beta heterodimers associate head-to-tail to form protofilaments running lengthwise along the microtubule wall with the beta-tubulin subunit facing the microtubule plus end conferring a structural polarity. Microtubules usually have 13 protofilaments but different protofilament numbers can be found in some organisms and specialized cells. The cofactor is Mg(2+).

The protein resides in the cytoplasm. It is found in the cytoskeleton. The catalysed reaction is GTP + H2O = GDP + phosphate + H(+). In terms of biological role, tubulin is the major constituent of microtubules, a cylinder consisting of laterally associated linear protofilaments composed of alpha- and beta-tubulin heterodimers. Microtubules grow by the addition of GTP-tubulin dimers to the microtubule end, where a stabilizing cap forms. Below the cap, tubulin dimers are in GDP-bound state, owing to GTPase activity of alpha-tubulin. This is Tubulin alpha chain from Entamoeba histolytica (strain ATCC 30459 / HM-1:IMSS / ABRM).